The following is a 124-amino-acid chain: Small ribosomal subunit protein uS12 (124 aa).

The disordered stretch occupies residues 1-27; it reads MPTINQLIRKPRKSQTEKTASPALQNC. Over residues 17–27 the composition is skewed to polar residues; that stretch reads EKTASPALQNC. D89 bears the 3-methylthioaspartic acid mark.

It belongs to the universal ribosomal protein uS12 family. Part of the 30S ribosomal subunit. Contacts proteins S8 and S17. May interact with IF1 in the 30S initiation complex.

Functionally, with S4 and S5 plays an important role in translational accuracy. Its function is as follows. Interacts with and stabilizes bases of the 16S rRNA that are involved in tRNA selection in the A site and with the mRNA backbone. Located at the interface of the 30S and 50S subunits, it traverses the body of the 30S subunit contacting proteins on the other side and probably holding the rRNA structure together. The combined cluster of proteins S8, S12 and S17 appears to hold together the shoulder and platform of the 30S subunit. The polypeptide is Small ribosomal subunit protein uS12 (Borreliella afzelii (strain PKo) (Borrelia afzelii)).